The sequence spans 444 residues: Tryptophan 5-hydroxylase 1 (444 aa).

The ACT domain occupies Ser-19–Asn-94. Ser-58 carries the phosphoserine; by PKA modification. 3 residues coordinate L-tryptophan: Tyr-235, Arg-257, and Thr-265. Fe cation is bound by residues His-272, His-277, and Glu-317. L-tryptophan-binding residues include Ser-336 and Ile-366.

The protein belongs to the biopterin-dependent aromatic amino acid hydroxylase family. In terms of assembly, homotetramer. Interacts with DNAJC12. It depends on Fe(2+) as a cofactor. Ubiquitinated, leading to its degradation by the proteasome. Ubiquitinated is triggered by phosphorylation. In terms of processing, phosphorylated; triggering degradation by the proteasome. In terms of tissue distribution, seems to be less widely expressed than isoform 1.

It catalyses the reaction (6R)-L-erythro-5,6,7,8-tetrahydrobiopterin + L-tryptophan + O2 = 5-hydroxy-L-tryptophan + (4aS,6R)-4a-hydroxy-L-erythro-5,6,7,8-tetrahydrobiopterin. Its pathway is aromatic compound metabolism; serotonin biosynthesis; serotonin from L-tryptophan: step 1/2. Its function is as follows. Oxidizes L-tryptophan to 5-hydroxy-l-tryptophan in the rate-determining step of serotonin biosynthesis. In Homo sapiens (Human), this protein is Tryptophan 5-hydroxylase 1 (TPH1).